Here is a 95-residue protein sequence, read N- to C-terminus: Co-chaperonin GroES (95 aa).

Belongs to the GroES chaperonin family. In terms of assembly, heptamer of 7 subunits arranged in a ring. Interacts with the chaperonin GroEL.

It is found in the cytoplasm. In terms of biological role, together with the chaperonin GroEL, plays an essential role in assisting protein folding. The GroEL-GroES system forms a nano-cage that allows encapsulation of the non-native substrate proteins and provides a physical environment optimized to promote and accelerate protein folding. GroES binds to the apical surface of the GroEL ring, thereby capping the opening of the GroEL channel. This chain is Co-chaperonin GroES, found in Lachnoclostridium phytofermentans (strain ATCC 700394 / DSM 18823 / ISDg) (Clostridium phytofermentans).